The chain runs to 81 residues: MSFLISLIVAIIIGWLGSLFVKGDMPGGIIGSMIAGLIGAWIGHGLLGTWGPHLAGFAIIPAVIGAAIVVFLVSLLTRKRG.

3 helical membrane passes run 1 to 21 (MSFLISLIVAIIIGWLGSLFV), 27 to 47 (GGIIGSMIAGLIGAWIGHGLL), and 56 to 76 (GFAIIPAVIGAAIVVFLVSLL).

The protein belongs to the UPF0410 family.

It is found in the cell membrane. This is UPF0410 protein YwzA (ywzA) from Bacillus subtilis (strain 168).